Reading from the N-terminus, the 92-residue chain is UPF0223 protein SZO_10560 (92 aa).

It belongs to the UPF0223 family.

This chain is UPF0223 protein SZO_10560, found in Streptococcus equi subsp. zooepidemicus (strain H70).